Reading from the N-terminus, the 108-residue chain is UPF0102 protein Shewana3_3881 (108 aa).

This sequence belongs to the UPF0102 family.

The protein is UPF0102 protein Shewana3_3881 of Shewanella sp. (strain ANA-3).